The primary structure comprises 380 residues: N-acetylcysteine deacetylase (380 aa).

Ni(2+) is bound by residues Cys98, His100, Glu134, His158, and His350.

It belongs to the peptidase M20 family. A divalent metal cation is required as a cofactor.

The enzyme catalyses N-acetyl-L-cysteine + H2O = L-cysteine + acetate. The protein operates within amino-acid biosynthesis; L-cysteine biosynthesis. Functionally, probably catalyzes the deacetylation of N-acetylcysteine (NAC) to acetate and cysteine. Is involved in a S-(2-succino)cysteine (2SC) degradation pathway that allows B.subtilis to grow on 2SC as a sole sulfur source, via its metabolization to cysteine. This Bacillus subtilis (strain 168) protein is N-acetylcysteine deacetylase.